Here is a 198-residue protein sequence, read N- to C-terminus: MVITLPKLKYALNALSPHISEETLNFHYNKHHAGYVNKLNTLIKDTPFAEKSLLDIVKESSGAIFNNAAQIWNHTFYWDSMGPDCGGEPHGEIKEKIQEDFGSFNNFKEQFSNILCGHFGSGWGWLALNNNNKLVILQTHDAGNPIKDNTGIPILTCDIWEHAYYIDYRNDRASYVKAWWNLVNWNFANENLKKAMQK.

His-27, His-74, Asp-158, and His-162 together coordinate Fe cation.

The protein belongs to the iron/manganese superoxide dismutase family. As to quaternary structure, homodimer. It depends on Fe cation as a cofactor.

Its subcellular location is the cytoplasm. It catalyses the reaction 2 superoxide + 2 H(+) = H2O2 + O2. Functionally, destroys superoxide anion radicals which are normally produced within the cells and which are toxic to biological systems. This Plasmodium falciparum (isolate 3D7) protein is Superoxide dismutase [Fe] (SODB).